We begin with the raw amino-acid sequence, 720 residues long: Serine/threonine-protein kinase KIN82 (720 aa).

2 stretches are compositionally biased toward polar residues: residues 1 to 13 and 99 to 116; these read MTQQ…SQRL and FNHN…STSE. Disordered regions lie at residues 1–20 and 99–128; these read MTQQ…RSMS and FNHN…RSTI. Residue serine 203 is modified to Phosphoserine. The segment covering 230–241 has biased composition (low complexity); sequence SPLANLSLSNSP. Positions 230-257 are disordered; it reads SPLANLSLSNSPIDSPRKNSETRKDQIP. Over residues 244 to 255 the composition is skewed to basic and acidic residues; the sequence is SPRKNSETRKDQ. The 279-residue stretch at 324 to 602 folds into the Protein kinase domain; it reads FEKIRLLGQG…AADIKRHPFF (279 aa). ATP is bound by residues 330 to 338 and lysine 353; that span reads LGQGDVGKV. Aspartate 449 serves as the catalytic Proton acceptor.

The protein belongs to the protein kinase superfamily. Ser/Thr protein kinase family. KIN82 subfamily.

The enzyme catalyses L-seryl-[protein] + ATP = O-phospho-L-seryl-[protein] + ADP + H(+). The catalysed reaction is L-threonyl-[protein] + ATP = O-phospho-L-threonyl-[protein] + ADP + H(+). Its function is as follows. Flippase activator that phosphorylates DFN1 and DFN2 and which is involved in the generation of phospholipid asymmetry in membranes by the inward translocation of phospholipids. The protein is Serine/threonine-protein kinase KIN82 (KIN82) of Saccharomyces cerevisiae (strain ATCC 204508 / S288c) (Baker's yeast).